The following is a 378-amino-acid chain: Probable pectin lyase A (378 aa).

Positions 1–18 (MKYQGLLAIAGCIASASA) are cleaved as a signal peptide. Cystine bridges form between C81-C100 and C90-C224. N127 carries N-linked (GlcNAc...) asparagine glycosylation. R254 is an active-site residue. Cysteines 321 and 329 form a disulfide.

The protein belongs to the polysaccharide lyase 1 family.

The protein resides in the secreted. The enzyme catalyses Eliminative cleavage of (1-&gt;4)-alpha-D-galacturonan methyl ester to give oligosaccharides with 4-deoxy-6-O-methyl-alpha-D-galact-4-enuronosyl groups at their non-reducing ends.. Its function is as follows. Pectinolytic enzymes consist of four classes of enzymes: pectin lyase, polygalacturonase, pectin methylesterase and rhamnogalacturonase. Among pectinolytic enzymes, pectin lyase is the most important in depolymerization of pectin, since it cleaves internal glycosidic bonds of highly methylated pectins. The chain is Probable pectin lyase A (pelA) from Neosartorya fischeri (strain ATCC 1020 / DSM 3700 / CBS 544.65 / FGSC A1164 / JCM 1740 / NRRL 181 / WB 181) (Aspergillus fischerianus).